Consider the following 82-residue polypeptide: Putative antitoxin VapB23 (82 aa).

Its function is as follows. Putative antitoxin component of a possible type II toxin-antitoxin (TA) system. The cognate toxin is VapC23. The chain is Putative antitoxin VapB23 (vapB23) from Mycobacterium tuberculosis (strain ATCC 25618 / H37Rv).